Reading from the N-terminus, the 584-residue chain is Beta-fructofuranosidase, insoluble isoenzyme CWINV1 (584 aa).

An N-terminal signal peptide occupies residues 1 to 28; sequence MTKEVCSNIGLWLLLTLLIGNYVVNLEA. Substrate contacts are provided by residues 63–66, Gln82, Trp90, and 125–126; these read WMND and WS. Residue Asp66 is part of the active site. N-linked (GlcNAc...) asparagine glycosylation is found at Asn159 and Asn186. Substrate contacts are provided by residues 191-192, Glu246, and Asp282; that span reads RD. 2 N-linked (GlcNAc...) asparagine glycosylation sites follow: Asn342 and Asn446. Cys442 and Cys491 form a disulfide bridge.

Belongs to the glycosyl hydrolase 32 family. In terms of tissue distribution, expressed in seedlings, leaves, flowers, and seeds.

It is found in the secreted. Its subcellular location is the extracellular space. It localises to the apoplast. The protein localises to the cell wall. It catalyses the reaction Hydrolysis of terminal non-reducing beta-D-fructofuranoside residues in beta-D-fructofuranosides.. In terms of biological role, beta-fructofuranosidase that can use sucrose and 1-kestose, and, to a lower extent, neokestose and levan, as substrates, but not inuline. The chain is Beta-fructofuranosidase, insoluble isoenzyme CWINV1 (CWINV1) from Arabidopsis thaliana (Mouse-ear cress).